Reading from the N-terminus, the 25-residue chain is Aggression-stimulating peptide (25 aa).

Expressed by the skin glands of male frogs.

The protein localises to the secreted. In terms of biological role, stimulates aggressive behavior in male frogs. No effect on female frogs. The polypeptide is Aggression-stimulating peptide (Leptodactylus fallax (Mountain chicken frog)).